The chain runs to 171 residues: Disulfide bond formation protein B (171 aa).

Residues Met-1–Leu-10 lie on the Cytoplasmic side of the membrane. Residues Asn-11–Ile-27 form a helical membrane-spanning segment. Over Phe-28–Ile-46 the chain is Periplasmic. The cysteines at positions 38 and 41 are disulfide-linked. A helical transmembrane segment spans residues Gly-47–Pro-63. The Cytoplasmic segment spans residues Lys-64–Leu-70. A helical membrane pass occupies residues Leu-71 to Ala-88. The Periplasmic segment spans residues Arg-89–Glu-145. An intrachain disulfide couples Cys-104 to Cys-131. A helical membrane pass occupies residues Gln-146 to Arg-164. Residues Ile-165–Ala-171 lie on the Cytoplasmic side of the membrane.

The protein belongs to the DsbB family.

Its subcellular location is the cell inner membrane. In terms of biological role, required for disulfide bond formation in some periplasmic proteins. Acts by oxidizing the DsbA protein. This Psychrobacter sp. (strain PRwf-1) protein is Disulfide bond formation protein B.